We begin with the raw amino-acid sequence, 440 residues long: Cell division protein DivIB (440 aa).

The span at 1–10 (MMDDKTKNDQ) shows a compositional bias: basic and acidic residues. Disordered regions lie at residues 1–97 (MMDD…DSNI) and 123–154 (QHQSAPNEQNSDSNDEETVTKKERKSKVTQLK). At 1 to 174 (MMDDKTKNDQ…RRKRQKRIQY (174 aa)) the chain is on the cytoplasmic side. Acidic residues predominate over residues 12-21 (ESNEDKDELE). Over residues 27–39 (TSKKRRQRKRSKA) the composition is skewed to basic residues. Positions 78–87 (DSASSHANDN) are enriched in low complexity. Residues 88 to 97 (NIDDSTDSNI) show a composition bias toward acidic residues. Positions 124–134 (HQSAPNEQNSD) are enriched in polar residues. The chain crosses the membrane as a helical span at residues 175–195 (SVITILVLLIAVILIYMFSPL). Residues 196 to 264 (SKIAHVNING…NTLNVDITEN (69 aa)) enclose the POTRA domain. Residues 196-440 (SKIAHVNING…KINKQSSKNN (245 aa)) are Extracellular-facing. Residues 397-440 (YRGNTSTQSESDKNVTKSSQEENQAKEELQSVLNKINKQSSKNN) are disordered. The span at 406–425 (ESDKNVTKSSQEENQAKEEL) shows a compositional bias: basic and acidic residues. Over residues 427-440 (SVLNKINKQSSKNN) the composition is skewed to polar residues.

The protein belongs to the FtsQ/DivIB family. DivIB subfamily.

It is found in the cell membrane. Functionally, cell division protein that may be involved in stabilizing or promoting the assembly of the division complex. This Staphylococcus aureus (strain MRSA252) protein is Cell division protein DivIB.